The following is a 245-amino-acid chain: Probable transcriptional regulatory protein Aflv_0709 (245 aa).

Over residues 1 to 14 the composition is skewed to basic residues; the sequence is MAGHSKWKNIQRRK. A disordered region spans residues 1 to 21; that stretch reads MAGHSKWKNIQRRKNAQDAKR.

The protein belongs to the TACO1 family.

The protein localises to the cytoplasm. The protein is Probable transcriptional regulatory protein Aflv_0709 of Anoxybacillus flavithermus (strain DSM 21510 / WK1).